Consider the following 642-residue polypeptide: Threonine--tRNA ligase (642 aa).

The TGS domain occupies 1–61 (MPVIRFYDGS…REDAFIEFVD (61 aa)). Residues 243–534 (DHRKIGKFLQ…LIEECSGNLP (292 aa)) form a catalytic region. Cys-334, His-385, and His-511 together coordinate Zn(2+).

Belongs to the class-II aminoacyl-tRNA synthetase family. Homodimer. Zn(2+) serves as cofactor.

It localises to the cytoplasm. The enzyme catalyses tRNA(Thr) + L-threonine + ATP = L-threonyl-tRNA(Thr) + AMP + diphosphate + H(+). In terms of biological role, catalyzes the attachment of threonine to tRNA(Thr) in a two-step reaction: L-threonine is first activated by ATP to form Thr-AMP and then transferred to the acceptor end of tRNA(Thr). Also edits incorrectly charged L-seryl-tRNA(Thr). This is Threonine--tRNA ligase from Buchnera aphidicola subsp. Acyrthosiphon pisum (strain Tuc7).